Consider the following 293-residue polypeptide: 1D-myo-inositol 2-acetamido-2-deoxy-alpha-D-glucopyranoside deacetylase (293 aa).

Residues histidine 16, aspartate 19, and histidine 156 each contribute to the Zn(2+) site.

This sequence belongs to the MshB deacetylase family. Requires Zn(2+) as cofactor.

The enzyme catalyses 1D-myo-inositol 2-acetamido-2-deoxy-alpha-D-glucopyranoside + H2O = 1D-myo-inositol 2-amino-2-deoxy-alpha-D-glucopyranoside + acetate. In terms of biological role, catalyzes the deacetylation of 1D-myo-inositol 2-acetamido-2-deoxy-alpha-D-glucopyranoside (GlcNAc-Ins) in the mycothiol biosynthesis pathway. In Nakamurella multipartita (strain ATCC 700099 / DSM 44233 / CIP 104796 / JCM 9543 / NBRC 105858 / Y-104) (Microsphaera multipartita), this protein is 1D-myo-inositol 2-acetamido-2-deoxy-alpha-D-glucopyranoside deacetylase.